A 317-amino-acid chain; its full sequence is Polysulfide reductase chain C (317 aa).

8 helical membrane-spanning segments follow: residues 20–40 (IAVYLFLAGLSAGAIISAIII), 54–75 (IIKAGALIAPLTIGAGLLLLIF), 98–118 (LGVLALFAYFPVVLIFLLGVF), 147–167 (IVTFVLAIGVGAYTGFLLSAM), 182–202 (FLASGISAGISGNLLIGLLFF), 221–237 (VILFEAFLLFILFVGMY), 259–279 (LFWLGVAGMGLALPVVLNVAL), and 289–309 (FVMLNALIVLAGVMALRFYIL).

Belongs to the NrfD family. As to quaternary structure, functional polysulfide reductase is made up of three different (A, B, and C) subunits.

It localises to the cell inner membrane. Functionally, could possibly serve as the membrane anchor of the enzyme. Its function is as follows. Component of the phosphorylative electron transport system with polysulfide as the terminal acceptor. The protein is Polysulfide reductase chain C (psrC) of Wolinella succinogenes (strain ATCC 29543 / DSM 1740 / CCUG 13145 / JCM 31913 / LMG 7466 / NCTC 11488 / FDC 602W) (Vibrio succinogenes).